We begin with the raw amino-acid sequence, 127 residues long: Oleate-induced peroxisomal protein POX18 (127 aa).

The SCP2 domain occupies 14-119; that stretch reads FKELHEGLAD…KATAIESVFK (106 aa). A hydrophobic region spans residues 33-41; that stretch reads AVNAVIVIT. A hydrophilic region spans residues 43–52; the sequence is KNKEGKEQSW.

As to quaternary structure, monomer.

It is found in the peroxisome. The protein operates within lipid metabolism; fatty acid metabolism. Its function is as follows. Is involved in beta-oxidation of long-chain fatty acids. Its exact function is unknown, but possesses a nonspecific lipid-transfer activity, despite the absence of a cysteine residue thought to be essential for the activity of its mammalian counterparts. The sequence is that of Oleate-induced peroxisomal protein POX18 (POX18) from Candida maltosa (Yeast).